Reading from the N-terminus, the 452-residue chain is Isocitrate dehydrogenase [NADP], mitochondrial (452 aa).

The transit peptide at 1-39 (MAGYLRVVRSLCRASGSRPAWAPAALTAPTSQEQTRRHY) directs the protein to the mitochondrion. N6-acetyllysine occurs at positions 45, 48, 67, and 69. N6-acetyllysine; alternate is present on residues Lys80 and Lys106. 2 positions are modified to N6-succinyllysine; alternate: Lys80 and Lys106. Residues 115–117 (TIT) and Arg122 each bind NADP(+). Thr117 is a substrate binding site. Residues 134 to 140 (SPNGTIR) and Arg149 contribute to the substrate site. Lys155 is modified (N6-acetyllysine). Lys166 bears the N6-acetyllysine; alternate mark. Lys166 bears the N6-succinyllysine; alternate mark. Arg172 contacts substrate. 2 positions are modified to N6-acetyllysine; alternate: Lys180 and Lys193. 2 positions are modified to N6-succinyllysine; alternate: Lys180 and Lys193. Lys199 carries the N6-acetyllysine modification. Lys256 bears the N6-acetyllysine; alternate mark. At Lys256 the chain carries N6-succinyllysine; alternate. N6-acetyllysine occurs at positions 263, 272, 275, and 280. An N6-acetyllysine; alternate modification is found at Lys282. An N6-succinyllysine; alternate modification is found at Lys282. Asp291 contributes to the Mn(2+) binding site. Lys299 contacts NADP(+). Position 314 (Asp314) interacts with Mn(2+). NADP(+) contacts are provided by residues 349–354 (GTVTRH) and Asn367. The residue at position 384 (Lys384) is an N6-acetyllysine; alternate. An N6-succinyllysine; alternate modification is found at Lys384. An N6-acetyllysine mark is found at Lys400, Lys413, and Lys442.

It belongs to the isocitrate and isopropylmalate dehydrogenases family. Homodimer. Mg(2+) serves as cofactor. Requires Mn(2+) as cofactor. In terms of processing, acetylation at Lys-413 dramatically reduces catalytic activity. Deacetylated by SIRT3.

It is found in the mitochondrion. It carries out the reaction D-threo-isocitrate + NADP(+) = 2-oxoglutarate + CO2 + NADPH. In terms of biological role, plays a role in intermediary metabolism and energy production. It may tightly associate or interact with the pyruvate dehydrogenase complex. The protein is Isocitrate dehydrogenase [NADP], mitochondrial (IDH2) of Macaca fascicularis (Crab-eating macaque).